The following is a 376-amino-acid chain: Pyrimidine monooxygenase RutA (376 aa).

Residues 61–62, asparagine 127, glutamate 136, 152–153, and serine 202 contribute to the FMN site; these read IK and RY.

The protein belongs to the NtaA/SnaA/DszA monooxygenase family. RutA subfamily.

The catalysed reaction is uracil + FMNH2 + NADH + O2 = (Z)-3-ureidoacrylate + FMN + NAD(+) + H2O + H(+). It catalyses the reaction thymine + FMNH2 + NADH + O2 = (Z)-2-methylureidoacrylate + FMN + NAD(+) + H2O + H(+). Functionally, catalyzes the pyrimidine ring opening between N-3 and C-4 by an unusual flavin hydroperoxide-catalyzed mechanism, adding oxygen atoms in the process to yield ureidoacrylate peracid, that immediately reacts with FMN forming ureidoacrylate and FMN-N(5)-oxide. The FMN-N(5)-oxide reacts spontaneously with NADH to produce FMN. Requires the flavin reductase RutF to regenerate FMN in vivo. This is Pyrimidine monooxygenase RutA from Methylorubrum extorquens (strain CM4 / NCIMB 13688) (Methylobacterium extorquens).